We begin with the raw amino-acid sequence, 75 residues long: Large ribosomal subunit protein eL14 (75 aa).

Belongs to the eukaryotic ribosomal protein eL14 family.

The protein is Large ribosomal subunit protein eL14 of Methanothermobacter thermautotrophicus (strain ATCC 29096 / DSM 1053 / JCM 10044 / NBRC 100330 / Delta H) (Methanobacterium thermoautotrophicum).